Reading from the N-terminus, the 180-residue chain is ATP synthase subunit delta (180 aa).

It belongs to the ATPase delta chain family. In terms of assembly, F-type ATPases have 2 components, F(1) - the catalytic core - and F(0) - the membrane proton channel. F(1) has five subunits: alpha(3), beta(3), gamma(1), delta(1), epsilon(1). F(0) has three main subunits: a(1), b(2) and c(10-14). The alpha and beta chains form an alternating ring which encloses part of the gamma chain. F(1) is attached to F(0) by a central stalk formed by the gamma and epsilon chains, while a peripheral stalk is formed by the delta and b chains.

It is found in the cell inner membrane. Its function is as follows. F(1)F(0) ATP synthase produces ATP from ADP in the presence of a proton or sodium gradient. F-type ATPases consist of two structural domains, F(1) containing the extramembraneous catalytic core and F(0) containing the membrane proton channel, linked together by a central stalk and a peripheral stalk. During catalysis, ATP synthesis in the catalytic domain of F(1) is coupled via a rotary mechanism of the central stalk subunits to proton translocation. This protein is part of the stalk that links CF(0) to CF(1). It either transmits conformational changes from CF(0) to CF(1) or is implicated in proton conduction. The sequence is that of ATP synthase subunit delta from Geobacter metallireducens (strain ATCC 53774 / DSM 7210 / GS-15).